A 119-amino-acid chain; its full sequence is Large ribosomal subunit protein bL20 (119 aa).

The protein belongs to the bacterial ribosomal protein bL20 family.

In terms of biological role, binds directly to 23S ribosomal RNA and is necessary for the in vitro assembly process of the 50S ribosomal subunit. It is not involved in the protein synthesizing functions of that subunit. The protein is Large ribosomal subunit protein bL20 of Lactococcus lactis subsp. cremoris (strain MG1363).